Reading from the N-terminus, the 220-residue chain is UPF0502 protein VV2_0756 (220 aa).

Belongs to the UPF0502 family.

This is UPF0502 protein VV2_0756 from Vibrio vulnificus (strain CMCP6).